We begin with the raw amino-acid sequence, 464 residues long: MTSMSSLFSFTSPAVKRLLGWKQGDEEEKWAEKAVDALVKKLKKKKGAMEDLEKALSSPGQPSKCVTIPRSLDGRLQVSHRKGLPHVIYCRVWRWPDLQSHHELKPLEVCEYPFGSKQKEVCINPYHYKRVESPVLPPVLVPRHSEFNPQHSLLVQFRNLSHNEPHMPLNATFPESFQQHSGGSSFPISPNSPYPPSPASSGTYPNSPASSGPSSPFQLPADTPPPAYMPPDEQMGQDGSQSMETGSSLAPQNMPRGDVQPVEYQEPSHWCSIVYYELNNRVGEAYHASSTSVLVDGFTDPSNNKNRFCLGLLSNVNRNSTIENTRRHIGKGVHLYYVGGEVYAECLSDTSIFVQSRNCNYHHGFHPTTVCKIPSGCSLKIFNNQEFAQLLAQSVNHGFEAVYELTKMCTIRMSFVKGWGAEYHRQDVTSTPCWIEVHLHGPLQWLDKVLTQMGSPLNPISSVS.

An MH1 domain is found at 13–137 (PAVKRLLGWK…YKRVESPVLP (125 aa)). Zn(2+) is bound by residues cysteine 65, cysteine 110, cysteine 122, and histidine 127. The disordered stretch occupies residues 166–258 (HMPLNATFPE…LAPQNMPRGD (93 aa)). The segment covering 173–183 (FPESFQQHSGG) has biased composition (polar residues). Low complexity predominate over residues 199–216 (ASSGTYPNSPASSGPSSP). Over residues 237–251 (QDGSQSMETGSSLAP) the composition is skewed to polar residues. Residues 270–464 (WCSIVYYELN…SPLNPISSVS (195 aa)) form the MH2 domain.

The protein belongs to the dwarfin/SMAD family. As to quaternary structure, may form trimers with the co-SMAD SMAD4.

The protein localises to the cytoplasm. Its subcellular location is the nucleus. Involved in ventralization. May mediate Bmp2b signaling during early phases of embryonic dorsal-ventral pattern formation. Required for initiation of Smad1 expression during gastrulation. The protein is Mothers against decapentaplegic homolog 5 (smad5) of Danio rerio (Zebrafish).